Consider the following 210-residue polypeptide: Large ribosomal subunit protein uL3 (210 aa).

A disordered region spans residues 126 to 167 (WGFQRGPSGHGSKNIREPGSTGNATFPGRVIKGKKMPGQKGN). Basic residues predominate over residues 156 to 167 (IKGKKMPGQKGN).

Belongs to the universal ribosomal protein uL3 family. Part of the 50S ribosomal subunit. Forms a cluster with proteins L14 and L19.

In terms of biological role, one of the primary rRNA binding proteins, it binds directly near the 3'-end of the 23S rRNA, where it nucleates assembly of the 50S subunit. The sequence is that of Large ribosomal subunit protein uL3 from Syntrophobacter fumaroxidans (strain DSM 10017 / MPOB).